The primary structure comprises 536 residues: Probable 1,4-beta-D-glucan cellobiohydrolase B (536 aa).

The N-terminal stretch at 1–21 (MSSFQVYRAALLLSILATANA) is a signal peptide. Residues 22-458 (QQVGTYTTET…SNIKFGPIGS (437 aa)) are catalytic. Glu-233 functions as the Nucleophile in the catalytic mechanism. Glu-238 serves as the catalytic Proton donor. N-linked (GlcNAc...) asparagine glycosylation is found at Asn-351 and Asn-414. The interval 459–500 (TYSSGSSSGSGSSSSSSSTTTKATSTTLKTTSTTSSGSSSTS) is ser/Thr-rich linker. Positions 464–499 (SSSGSGSSSSSSSTTTKATSTTLKTTSTTSSGSSST) are disordered. The CBM1 domain maps to 500-536 (SAAQAYGQCGGQGWTGPTTCVSGYTCTYENAYYSQCL). Cystine bridges form between Cys-508–Cys-525 and Cys-519–Cys-535.

The protein belongs to the glycosyl hydrolase 7 (cellulase C) family.

The protein resides in the secreted. The catalysed reaction is Hydrolysis of (1-&gt;4)-beta-D-glucosidic linkages in cellulose and cellotetraose, releasing cellobiose from the non-reducing ends of the chains.. Functionally, the biological conversion of cellulose to glucose generally requires three types of hydrolytic enzymes: (1) Endoglucanases which cut internal beta-1,4-glucosidic bonds; (2) Exocellobiohydrolases that cut the disaccharide cellobiose from the non-reducing end of the cellulose polymer chain; (3) Beta-1,4-glucosidases which hydrolyze the cellobiose and other short cello-oligosaccharides to glucose. The polypeptide is Probable 1,4-beta-D-glucan cellobiohydrolase B (cbhB) (Aspergillus niger (strain ATCC MYA-4892 / CBS 513.88 / FGSC A1513)).